The primary structure comprises 342 residues: Succinylglutamate desuccinylase (342 aa).

3 residues coordinate Zn(2+): His64, Glu67, and His159. Residue Glu222 is part of the active site.

This sequence belongs to the AspA/AstE family. Succinylglutamate desuccinylase subfamily. It depends on Zn(2+) as a cofactor.

The catalysed reaction is N-succinyl-L-glutamate + H2O = L-glutamate + succinate. The protein operates within amino-acid degradation; L-arginine degradation via AST pathway; L-glutamate and succinate from L-arginine: step 5/5. Functionally, transforms N(2)-succinylglutamate into succinate and glutamate. In Burkholderia orbicola (strain MC0-3), this protein is Succinylglutamate desuccinylase.